We begin with the raw amino-acid sequence, 140 residues long: 3-hydroxyacyl-[acyl-carrier-protein] dehydratase FabZ (140 aa).

His-46 is an active-site residue.

This sequence belongs to the thioester dehydratase family. FabZ subfamily.

It is found in the cytoplasm. It catalyses the reaction a (3R)-hydroxyacyl-[ACP] = a (2E)-enoyl-[ACP] + H2O. In terms of biological role, involved in unsaturated fatty acids biosynthesis. Catalyzes the dehydration of short chain beta-hydroxyacyl-ACPs and long chain saturated and unsaturated beta-hydroxyacyl-ACPs. This Pseudothermotoga lettingae (strain ATCC BAA-301 / DSM 14385 / NBRC 107922 / TMO) (Thermotoga lettingae) protein is 3-hydroxyacyl-[acyl-carrier-protein] dehydratase FabZ.